A 425-amino-acid polypeptide reads, in one-letter code: Histidine--tRNA ligase (425 aa).

This sequence belongs to the class-II aminoacyl-tRNA synthetase family. In terms of assembly, homodimer.

The protein resides in the cytoplasm. It carries out the reaction tRNA(His) + L-histidine + ATP = L-histidyl-tRNA(His) + AMP + diphosphate + H(+). In Aeromonas hydrophila subsp. hydrophila (strain ATCC 7966 / DSM 30187 / BCRC 13018 / CCUG 14551 / JCM 1027 / KCTC 2358 / NCIMB 9240 / NCTC 8049), this protein is Histidine--tRNA ligase.